Consider the following 157-residue polypeptide: Ribosomal RNA large subunit methyltransferase H (157 aa).

S-adenosyl-L-methionine contacts are provided by residues leucine 73, glycine 105, and 124-129 (LSQMTF).

Belongs to the RNA methyltransferase RlmH family. In terms of assembly, homodimer.

It is found in the cytoplasm. It carries out the reaction pseudouridine(1915) in 23S rRNA + S-adenosyl-L-methionine = N(3)-methylpseudouridine(1915) in 23S rRNA + S-adenosyl-L-homocysteine + H(+). In terms of biological role, specifically methylates the pseudouridine at position 1915 (m3Psi1915) in 23S rRNA. In Flavobacterium psychrophilum (strain ATCC 49511 / DSM 21280 / CIP 103535 / JIP02/86), this protein is Ribosomal RNA large subunit methyltransferase H.